The sequence spans 203 residues: Calcineurin B-like protein 5 (203 aa).

G2 carries the N-myristoyl glycine lipid modification. EF-hand domains lie at E30–K65, K66–N101, S103–E138, and I147–T182.

The protein belongs to the calcineurin regulatory subunit family. As to quaternary structure, homodimer. Interacts with PP2CA, CIPK2, CIPK11, CIPK23 and CIPK24. Post-translationally, both N-myristoylation and calcium-mediated conformational changes are essential for its function. Expressed in green tissues, but not in the roots.

The protein localises to the cytoplasm. The protein resides in the nucleus. Functionally, acts as a calcium sensor. CBL proteins interact with CIPK serine-threonine protein kinases. Binding of a CBL protein to the regulatory NAF domain of a CIPK protein lead to the activation of the kinase in a calcium-dependent manner. May function as a positive regulator of salt or drought responses. This is Calcineurin B-like protein 5 (CBL5) from Arabidopsis thaliana (Mouse-ear cress).